The following is an 855-amino-acid chain: MSEGKQQFKDSNKPHKDSTDQDDDAATIVPQTLTYSRNEGHFLGSNFHGVTDDRTTLFDGEEGRREDDLLPSLRSSNSKAHLISSQLSQWNYNNNRVLLKRSILKTQAFMDQLQEENNIRPIFIAANDEREKLHVLQLNIKLDGQYNTKEKNGFNIEKKALSKLFHSQIVSVTNHLNALKKRVDDVSSKVFITGDVNTGKSALCNSLLKQRLLPEDQLPCTNVFSEILEARENDGIEEVHAIPLNIAPTLKEAIDMYSIQNPKTYEIHTLKELPDLVPQNGKYALLKIYIKDDKRPASTSLLRNGTVDISLIDSPGLNMDSLQTAEVMSRQEEIDLVIFVVNAENQLTLSAKEFISLASREKKLMFFVVKKFDKIRDKQRCKELILKQIRDLSPETYKRAADFVHFVSKNGDELPHYHNENDNEDHGDRKPDDDPYSSSDPDPDFDSLEDSLRNFVLKKRSLSKLLPAKTYLSKLLSDIIMISKSNMKMYSEEEIKINEQLETLRPEILSARAKCNDLTTSVDQMAEQTITMTYNNTKEALLNALDVPLHEYPKYQGLGQIYDFIFSTEAFIANQIDESIGSSELFAKQKTDLLVKKIYEIGKNELGDDFMCERVFRSELMFRKRKHLIGKRLKVSLSITDLFAPTWKGFLSYLSWQKPVTAPLPDIEGQTNEGQIGLMKYLGLKNYPLTQYWSRPSLLFTSKIPTLTLYFLGSTKVVGNIILNGIKLSSWSSLKKLSVPVIVVGSLLGLTYLIHDLPRALPMNLSIKYKRKLQELDYIHLNAQRTSNEVRDVLRVPTREILRSCEIIMDKKQITKKELENKKESNLLSIKFFQSLYEGTVAQKLMVEEINLDID.

The segment covering M1–T19 has biased composition (basic and acidic residues). Positions M1–T27 are disordered. Residues M1 to P705 are Cytoplasmic-facing. An HRN region spans residues N91–V190. In terms of domain architecture, Dynamin-type G spans D184–P467. Residues N197–A202 and K370–D373 contribute to the GTP site. A Glycyl lysine isopeptide (Lys-Gly) (interchain with G-Cter in ubiquitin) cross-link involves residue K398. GTP is bound at residue S408. Residues E413–D433 are compositionally biased toward basic and acidic residues. Positions E413–S447 are disordered. K464 is covalently cross-linked (Glycyl lysine isopeptide (Lys-Gly) (interchain with G-Cter in ubiquitin)). The HR1 stretch occupies residues K484–V547. The interval G630–Q843 is required for interaction with UGO1. A helical membrane pass occupies residues T706–I726. Residues K727–K736 are Mitochondrial intermembrane-facing. Residues L737 to L757 traverse the membrane as a helical segment. Residues P758–D855 lie on the Cytoplasmic side of the membrane. Positions Y769 to K831 are HR2. Residues T798–S825 are a coiled coil.

It belongs to the TRAFAC class dynamin-like GTPase superfamily. Dynamin/Fzo/YdjA family. Mitofusin subfamily. Homodimer. Dimerization depends on GTP binding. Component of a large multiprotein complex of 800 kDa. Binds the cytoplasmic domain of UGO1 which binds MGM1 through its intermembrane space domain. Interacts with MDM30. Interacts with UBP2 and UBP12. Interacts (when ubiquitinated) with DOA1; the interaction recruits FZO1 to CDC48 and promotes FZO1 proteasomal degradation. Ubiquitinated at Lys-398 and Lys-464. MDM30 and UGO1 are involved in ubiquitination. Deubiquitinated by UBP2 and UBP12. UBP2 and UBP12 recognize distinct ubiquitin chains on FZO1 that have opposing effects on mitochondrial fusion. UBP2 removes ubiquitin chains that initiate proteolysis of FZO1 and inhibit fusion. UBP12 recognizes ubiquitin chains that stabilize FZO1 and promote mitochondrial fusion. UBP12 deubiquitylates FZO1 only after oligomerization.

It is found in the mitochondrion outer membrane. It carries out the reaction GTP + H2O = GDP + phosphate + H(+). Its function is as follows. Essential transmembrane GTPase, which mediates mitochondrial fusion. Fusion proceeds through several steps; first mitochondria are tethered together, then brought into close contact, followed by the formation of a docking ring around contact areas, and finally membrane fusion. Fusion of mitochondria occurs in many cell types and constitutes an important step in mitochondrial morphology, which is balanced between fusion and fission, mediated by FZO1 and DNM1, respectively. Functions antagonistically with DNM1. Probably acts by forming membrane contact sites that mediate mitochondrial membrane fusion. Mitochondrial docking and fusion requires GTP hydrolysis. Mitochondrial fusion also promotes increased lifespan. The polypeptide is Mitofusin FZO1 (FZO1) (Saccharomyces cerevisiae (strain ATCC 204508 / S288c) (Baker's yeast)).